Consider the following 238-residue polypeptide: Protein FEV (238 aa).

A DNA-binding region (ETS) is located at residues 47–127 (IQLWQFLLEL…HGKRYAYRFD (81 aa)). A may mediate active transcriptional repression region spans residues 129–238 (QGLAQACQPP…AASHLGGHYH (110 aa)).

This sequence belongs to the ETS family. As to expression, in brain, exclusively expressed in the major serotonergic neurons of the dorsal and median raphe nuclei located in the midbrain and pons. Also detected in prostate and small intestine.

The protein resides in the nucleus. In terms of biological role, functions as a transcriptional regulator. According to PubMed:12761502, it functions as a transcriptional repressor. Functions in the differentiation and the maintenance of the central serotonergic neurons. May play a role in cell growth. The sequence is that of Protein FEV (FEV) from Homo sapiens (Human).